Consider the following 243-residue polypeptide: 1-(5-phosphoribosyl)-5-[(5-phosphoribosylamino)methylideneamino] imidazole-4-carboxamide isomerase (243 aa).

Residue aspartate 8 is the Proton acceptor of the active site. Residue aspartate 129 is the Proton donor of the active site.

It belongs to the HisA/HisF family.

The protein resides in the cytoplasm. The catalysed reaction is 1-(5-phospho-beta-D-ribosyl)-5-[(5-phospho-beta-D-ribosylamino)methylideneamino]imidazole-4-carboxamide = 5-[(5-phospho-1-deoxy-D-ribulos-1-ylimino)methylamino]-1-(5-phospho-beta-D-ribosyl)imidazole-4-carboxamide. The protein operates within amino-acid biosynthesis; L-histidine biosynthesis; L-histidine from 5-phospho-alpha-D-ribose 1-diphosphate: step 4/9. This chain is 1-(5-phosphoribosyl)-5-[(5-phosphoribosylamino)methylideneamino] imidazole-4-carboxamide isomerase, found in Moorella thermoacetica (strain ATCC 39073 / JCM 9320).